A 261-amino-acid polypeptide reads, in one-letter code: Leucyl/phenylalanyl-tRNA--protein transferase (261 aa).

The protein belongs to the L/F-transferase family.

The protein localises to the cytoplasm. The catalysed reaction is N-terminal L-lysyl-[protein] + L-leucyl-tRNA(Leu) = N-terminal L-leucyl-L-lysyl-[protein] + tRNA(Leu) + H(+). The enzyme catalyses N-terminal L-arginyl-[protein] + L-leucyl-tRNA(Leu) = N-terminal L-leucyl-L-arginyl-[protein] + tRNA(Leu) + H(+). It carries out the reaction L-phenylalanyl-tRNA(Phe) + an N-terminal L-alpha-aminoacyl-[protein] = an N-terminal L-phenylalanyl-L-alpha-aminoacyl-[protein] + tRNA(Phe). Its function is as follows. Functions in the N-end rule pathway of protein degradation where it conjugates Leu, Phe and, less efficiently, Met from aminoacyl-tRNAs to the N-termini of proteins containing an N-terminal arginine or lysine. The protein is Leucyl/phenylalanyl-tRNA--protein transferase of Yersinia pestis bv. Antiqua (strain Antiqua).